Here is an 857-residue protein sequence, read N- to C-terminus: MAFPAPAFSLANLLNGSYGVDTPEDVERLRSEQREEAAAACRNYRPLPAVDVSESVTEDAHSLRTPDGAPAEAVSDEFVTYGAEDYLEKSDDELLVAFETMVKPMRIGQLWCPAFNKCSFISSIAMARALLLAPRTSHRTMKCFEDLVAAIYTKSDFYYSEECEADDAQIDISSRDVPGYSFEPWSRTSGFEPPPICEACDMIMYQCPCFDFNALKKSCAERTFADDYVIEGLDGVVDNATLLSNLGPFLVPVKCQYEKCPTPTIAIPPDLNRATDRVDINLVQSICDSTLPTHSNYDDSFHQVFVESADYSIDLDHVRLRQSDLIAKIPDSGHMIPVLNTGSGHKRVGTTKEVLTAIKKRNADVPELGDSVNLSRLSKAVAERFFISYINGNSLASSNFVNVVSNFHDYMEKWKSSGLSYDDLPDLHAENLQFYDHMIKSDVKPVVSDTLNIDRPVPATITYHKKSITSQFSPLFTALFERFQRCLRERIILPVGKISSLEMAGFDVKNKHCLEIDLSKFDKSQGEFHLLIQEHILNGLGCPAPITKWWCDFHRFSYIRDRRAGVGMPISFQRRTGDALTYFGNTIVTMAEFAWCYDTDQFEKLLFSGDDSLGFSLLPPVGDPSKFTTLFNMEAKVMEPAVPYICSKFLLSDEFGNTFSVPDPLREVQRLGTKKIPYSDNDEFLFAHFMSFVDRLKFLDRMSQSCIDQLSIFFELKYKKSGEEAALMLGAFKKYTANFQSYKELYYSDRRQCELINSFCSTEFRVERVNSNKQRKNYGIERRCNDKRRTPTGSYGGGEEAETKVSQTESTGTRSQKSQRESAFKSQTIPLPTVLSSGWFGTDRVMPPCERGGVTRV.

Residues 511 to 624 (KHCLEIDLSK…FSLLPPVGDP (114 aa)) enclose the RdRp catalytic domain. Residues 780–789 (IERRCNDKRR) show a composition bias toward basic and acidic residues. A disordered region spans residues 780–827 (IERRCNDKRRTPTGSYGGGEEAETKVSQTESTGTRSQKSQRESAFKSQ). Positions 804 to 816 (KVSQTESTGTRSQ) are enriched in polar residues.

The protein belongs to the ssRNA positive-strand viruses RNA-directed RNA polymerase family. As to quaternary structure, interacts with replication protein 1a.

The enzyme catalyses RNA(n) + a ribonucleoside 5'-triphosphate = RNA(n+1) + diphosphate. Its function is as follows. RNA-dependent RNA polymerase which replicates the viral genome composed of 3 RNA segments, RNA1, RNA2 and RNA3. The protein is RNA-directed RNA polymerase 2a of Cucumber mosaic virus (strain FNY) (CMV).